A 323-amino-acid chain; its full sequence is tRNA-dihydrouridine(20/20a) synthase (323 aa).

Residues P14–L16 and Q66 contribute to the FMN site. C96 (proton donor) is an active-site residue. FMN contacts are provided by residues K135, H166, N206 to G208, and G228 to R229.

The protein belongs to the Dus family. DusA subfamily. The cofactor is FMN.

It catalyses the reaction 5,6-dihydrouridine(20) in tRNA + NADP(+) = uridine(20) in tRNA + NADPH + H(+). The enzyme catalyses 5,6-dihydrouridine(20) in tRNA + NAD(+) = uridine(20) in tRNA + NADH + H(+). It carries out the reaction 5,6-dihydrouridine(20a) in tRNA + NADP(+) = uridine(20a) in tRNA + NADPH + H(+). The catalysed reaction is 5,6-dihydrouridine(20a) in tRNA + NAD(+) = uridine(20a) in tRNA + NADH + H(+). Its function is as follows. Catalyzes the synthesis of 5,6-dihydrouridine (D), a modified base found in the D-loop of most tRNAs, via the reduction of the C5-C6 double bond in target uridines. Specifically modifies U20 and U20a in tRNAs. This Haemophilus ducreyi (strain 35000HP / ATCC 700724) protein is tRNA-dihydrouridine(20/20a) synthase.